The following is a 372-amino-acid chain: Glutamate 5-kinase (372 aa).

Residue Lys-14 coordinates ATP. Substrate is bound by residues Ser-54, Asp-141, and Asn-153. 173–174 (TD) contributes to the ATP binding site. Positions 280 to 358 (RGHVVIDAGA…GEIETVLGYM (79 aa)) constitute a PUA domain.

This sequence belongs to the glutamate 5-kinase family.

It is found in the cytoplasm. The catalysed reaction is L-glutamate + ATP = L-glutamyl 5-phosphate + ADP. It functions in the pathway amino-acid biosynthesis; L-proline biosynthesis; L-glutamate 5-semialdehyde from L-glutamate: step 1/2. Its function is as follows. Catalyzes the transfer of a phosphate group to glutamate to form L-glutamate 5-phosphate. The polypeptide is Glutamate 5-kinase (Burkholderia mallei (strain NCTC 10229)).